Reading from the N-terminus, the 193-residue chain is Putative deoxynucleotide monophosphate kinase (193 aa).

Lysine 10 contacts dGMP. Glycine 13 and threonine 16 together coordinate ATP. DGMP-binding residues include leucine 36, lysine 37, lysine 58, aspartate 122, arginine 124, glutamate 128, and serine 155.

This sequence belongs to the dNMP kinase family.

The catalysed reaction is a 2'-deoxyribonucleoside 5'-phosphate + ATP = a 2'-deoxyribonucleoside 5'-diphosphate + ADP. The sequence is that of Putative deoxynucleotide monophosphate kinase from Acanthamoeba polyphaga mimivirus (APMV).